A 147-amino-acid chain; its full sequence is MSIQDRPNRPARGGRGRYTPKRKICSFCAEKVSRIDYKDSAKLARYISDRGKIEPRRRTGTCARHQRALANAIKRARFIALMPFVSEHVRRQGNVATFSPIRELRPEPKIAEAKIEPKVEVKAEVAVPEVKAEVKPAAEASKPAESA.

It belongs to the bacterial ribosomal protein bS18 family. Part of the 30S ribosomal subunit. Forms a tight heterodimer with protein bS6.

Binds as a heterodimer with protein bS6 to the central domain of the 16S rRNA, where it helps stabilize the platform of the 30S subunit. In Dehalococcoides mccartyi (strain ATCC BAA-2100 / JCM 16839 / KCTC 5957 / BAV1), this protein is Small ribosomal subunit protein bS18.